Consider the following 74-residue polypeptide: Putative defensin-like protein 128 (74 aa).

Positions 1-24 (MSKLTNVVIFIVFFLGMMAKETQG) are cleaved as a signal peptide. 4 disulfides stabilise this stretch: Cys-28-Cys-72, Cys-37-Cys-56, Cys-42-Cys-66, and Cys-46-Cys-68.

This sequence belongs to the DEFL family.

It is found in the secreted. The polypeptide is Putative defensin-like protein 128 (LCR8) (Arabidopsis thaliana (Mouse-ear cress)).